A 34-amino-acid polypeptide reads, in one-letter code: Photosystem II reaction center protein M (34 aa).

A helical transmembrane segment spans residues 5-25 (ILAFIATALFILIPTAFLLIL).

The protein belongs to the PsbM family. In terms of assembly, PSII is composed of 1 copy each of membrane proteins PsbA, PsbB, PsbC, PsbD, PsbE, PsbF, PsbH, PsbI, PsbJ, PsbK, PsbL, PsbM, PsbT, PsbX, PsbY, PsbZ, Psb30/Ycf12, at least 3 peripheral proteins of the oxygen-evolving complex and a large number of cofactors. It forms dimeric complexes.

The protein resides in the plastid. Its subcellular location is the chloroplast thylakoid membrane. In terms of biological role, one of the components of the core complex of photosystem II (PSII). PSII is a light-driven water:plastoquinone oxidoreductase that uses light energy to abstract electrons from H(2)O, generating O(2) and a proton gradient subsequently used for ATP formation. It consists of a core antenna complex that captures photons, and an electron transfer chain that converts photonic excitation into a charge separation. This subunit is found at the monomer-monomer interface. This is Photosystem II reaction center protein M from Anthoceros angustus (Hornwort).